The primary structure comprises 46 residues: Large ribosomal subunit protein bL33B (46 aa).

This sequence belongs to the bacterial ribosomal protein bL33 family.

The sequence is that of Large ribosomal subunit protein bL33B (rpmG2) from Mycoplasmopsis pulmonis (strain UAB CTIP) (Mycoplasma pulmonis).